The following is an 801-amino-acid chain: MLVSYKWLKELVDIDVTPAALAEKMSTTGIEVEGIEVPAEGLSKLVVGHVLSCEDVPETHLHLCQVDTGDETPRQIVCGAPNVKAGIKVIVAVPGARIADNYKIKKGKIRGMESLGMICSLQELGLSDSIIPKEFSDGIQILPDEAVPGDAIFKYLDLDDHIIELSITPNRADALSMRGVAHEVAAIYGKSVSFPEKNLQESDKATSEAIEVAIASDNVLTYASRVVENVKVKPSPQWLQNLLMNAGIRPINNVVDVTNYVLLYFGQPMHAFDYDKFEDHKIVTRAARQGESLVTLDGEKRELTTEDLVITVADKPVALAGVMGGQATEIDANSQTVVLEAAVFDGKSIRKTSGRLNLRSESSSRFEKGVNYATVLEALDFAAAMLQELAEGQVLSGHVQAGQLSTEPVEVSTNLDYVNVRLGTELTFADIQRIFNQLGFGLTGDETRFTVAVPRRRWDISIPADLVEEIARIYGYDKLPTTLPEAGGTAAELTPTQALRRKVRGLAEGLGLTEIISYALTTPEKAIEFAVAPSHLTELMWPMSVERSALRQNMVSGMLDTVAYNVARKQSNLALYEIGKIFEQEVNPKEDLPNEVNHFAFTICGLVAQKDFQTQAQAVDFYHAKGILDTLFANLNLKVQYVPTKDLANMHPGRTALILLDEQVIGFVGQVHPGTAKAYSIPETYVAELDMAALEAALPSDQTFAEITKFPAMTRDIALLLDREVSHQAIVTAIESAGVKRLTKIKLFDVYEGATIQAGKKSMAYSLTFQNPNDNLTDEEVAKYMEKITKALTEQVGAEVR.

In terms of domain architecture, tRNA-binding spans 39-153 (AEGLSKLVVG…DEAVPGDAIF (115 aa)). A B5 domain is found at 406 to 481 (TEPVEVSTNL…RIYGYDKLPT (76 aa)). Positions 459, 465, 468, and 469 each coordinate Mg(2+). Residues 708–801 (TKFPAMTRDI…LTEQVGAEVR (94 aa)) enclose the FDX-ACB domain.

Belongs to the phenylalanyl-tRNA synthetase beta subunit family. Type 1 subfamily. As to quaternary structure, tetramer of two alpha and two beta subunits. The cofactor is Mg(2+).

The protein localises to the cytoplasm. The enzyme catalyses tRNA(Phe) + L-phenylalanine + ATP = L-phenylalanyl-tRNA(Phe) + AMP + diphosphate + H(+). In Streptococcus pyogenes serotype M3 (strain SSI-1), this protein is Phenylalanine--tRNA ligase beta subunit.